The primary structure comprises 317 residues: Bile salt hydrolase/transferase (317 aa).

C2 (nucleophile; acyl-thioester intermediate) is an active-site residue. Deoxycholate contacts are provided by C2 and R18. N82 is a binding site for taurine.

This sequence belongs to the peptidase C59 family. In terms of assembly, homotetramer. The tetramer consists of a dimer of dimers.

It carries out the reaction glycocholate + H2O = cholate + glycine. The enzyme catalyses glycodeoxycholate + H2O = deoxycholate + glycine. The catalysed reaction is chenodeoxycholate + glycine = glycochenodeoxycholate + H2O. It catalyses the reaction cholate + taurine = taurocholate + H2O. It carries out the reaction taurodeoxycholate + H2O = deoxycholate + taurine. The enzyme catalyses taurochenodeoxycholate + H2O = chenodeoxycholate + taurine. The catalysed reaction is an L-alpha-amino acid + cholate = an N-choloyl-L-alpha-amino acid + H2O. It catalyses the reaction an L-alpha-amino acid + taurocholate = an N-choloyl-L-alpha-amino acid + taurine. It carries out the reaction cholate + L-alanine = L-alanocholate + H2O. The enzyme catalyses taurocholate + L-alanine = L-alanocholate + taurine. The catalysed reaction is cholate + L-serine = L-serocholate + H2O. It catalyses the reaction taurocholate + L-serine = L-serocholate + taurine. It carries out the reaction cholate + L-histidine = L-histidocholate + H2O. The enzyme catalyses taurocholate + L-histidine = L-histidocholate + taurine. It functions in the pathway lipid metabolism; bile acid biosynthesis. Functionally, possesses dual functions in bile acid metabolism. Acts as a bile salt hydrolase that catalyzes the deconjugation of glycine- and taurine-linked bile salts, which occurs naturally in the intestines of humans, releasing amino acid residues and deconjugated bile salts (bile acids). Can hydrolyze the amide bond in all six major human conjugated bile salts, namely glycocholate (GCA), glycodeoxycholate (GDCA), glycochenodeoxycholate (GCDCA), taurocholate (TCA), taurodeoxycholate (TDCA) and taurochenodeoxycholate (TCDCA). Shows a slight preference for glycine-conjugated bile acids as substrates. Also acts as an amine N-acyltransferase that conjugates a wide variety of amino acids to conjugated and non-conjugated bile acids, thus producing bacterial bile acid amidates (BBAAs) - also named microbially conjugated bile acids (MCBAs) - in the gastrointestinal tract. These BBAAs may facilitate communication between the microbiota and host through the activation of human ligand-activated transcription factors. This is Bile salt hydrolase/transferase from Bifidobacterium longum subsp. longum (strain ATCC 15707 / DSM 20219 / JCM 1217 / NCTC 11818 / E194b).